Consider the following 270-residue polypeptide: Diaminopimelate epimerase (270 aa).

Positions 15, 49, and 66 each coordinate substrate. Cysteine 75 (proton donor) is an active-site residue. Substrate is bound by residues glycine 76–asparagine 77, asparagine 155, asparagine 187, and glutamate 204–arginine 205. Catalysis depends on cysteine 213, which acts as the Proton acceptor. Residue glycine 214–serine 215 coordinates substrate.

Belongs to the diaminopimelate epimerase family. As to quaternary structure, homodimer.

The protein localises to the cytoplasm. The catalysed reaction is (2S,6S)-2,6-diaminopimelate = meso-2,6-diaminopimelate. Its pathway is amino-acid biosynthesis; L-lysine biosynthesis via DAP pathway; DL-2,6-diaminopimelate from LL-2,6-diaminopimelate: step 1/1. In terms of biological role, catalyzes the stereoinversion of LL-2,6-diaminopimelate (L,L-DAP) to meso-diaminopimelate (meso-DAP), a precursor of L-lysine and an essential component of the bacterial peptidoglycan. The sequence is that of Diaminopimelate epimerase from Rickettsia typhi (strain ATCC VR-144 / Wilmington).